Reading from the N-terminus, the 72-residue chain is uncharacterized protein (72 aa).

Residues 11–31 (WCCTVLSAFGVVILSVIAHLF) form a helical membrane-spanning segment.

It localises to the membrane. This is an uncharacterized protein from Saccharomyces cerevisiae (strain ATCC 204508 / S288c) (Baker's yeast).